Consider the following 138-residue polypeptide: Nucleoside diphosphate kinase (138 aa).

ATP contacts are provided by Lys-10, Phe-58, Arg-86, Thr-92, Arg-103, and Asn-113. The active-site Pros-phosphohistidine intermediate is the His-116.

Belongs to the NDK family. Homotetramer. Mg(2+) serves as cofactor.

The protein localises to the cytoplasm. The enzyme catalyses a 2'-deoxyribonucleoside 5'-diphosphate + ATP = a 2'-deoxyribonucleoside 5'-triphosphate + ADP. It carries out the reaction a ribonucleoside 5'-diphosphate + ATP = a ribonucleoside 5'-triphosphate + ADP. Its function is as follows. Major role in the synthesis of nucleoside triphosphates other than ATP. The ATP gamma phosphate is transferred to the NDP beta phosphate via a ping-pong mechanism, using a phosphorylated active-site intermediate. This is Nucleoside diphosphate kinase from Glaesserella parasuis serovar 5 (strain SH0165) (Haemophilus parasuis).